Consider the following 733-residue polypeptide: LMBR1 domain-containing protein 2 homolog A (733 aa).

A run of 5 helical transmembrane segments spans residues 1–21 (MIVI…KILH), 33–53 (VYIS…LVPI), 125–145 (FYFG…SFVL), 163–183 (AYLY…LLAV), and 191–211 (MVGF…IILM). Residues 232–266 (LKHLQFKAVELLNSKKKANEELIATMKVIRRIQEK) are a coiled coil. The next 4 helical transmembrane spans lie at 386–406 (AAIV…ALAF), 423–443 (VSNI…ALTC), 468–488 (SIIF…YNFI), and 513–533 (VAPF…VIVC). Disordered stretches follow at residues 581 to 641 (NNIK…TSSA), 649 to 668 (LKKS…PYEQ), and 674 to 696 (ESND…TYNA). Over residues 596–619 (DSTSNNPKQIFKSGSTTISKQSPP) the composition is skewed to polar residues. 2 stretches are compositionally biased toward low complexity: residues 620–640 (NLNV…NTSS) and 654–664 (NNNNNNNNNNN). The segment covering 674–685 (ESNDFDDDDDIE) has biased composition (acidic residues).

The protein belongs to the LIMR family.

It is found in the membrane. The chain is LMBR1 domain-containing protein 2 homolog A from Dictyostelium discoideum (Social amoeba).